The primary structure comprises 216 residues: 1-Cys peroxiredoxin PER1 (216 aa).

Positions 4-159 constitute a Thioredoxin domain; the sequence is ITLGDTVPNL…VLRALDSLLM (156 aa). Cys-46 acts as the Cysteine sulfenic acid (-SOH) intermediate in catalysis. The Bipartite nuclear localization signal motif lies at 191–214; the sequence is KKMFPQGFKTADLPSKKGYLRHTE.

It belongs to the peroxiredoxin family. Prx6 subfamily. In terms of tissue distribution, predominantly expressed in seed. Expressed in endosperm, embryo and aleurone cells. Also detected in young seedlings, abscission zones, stem branching points.

It is found in the nucleus. The protein resides in the cytoplasm. It catalyses the reaction a hydroperoxide + [thioredoxin]-dithiol = an alcohol + [thioredoxin]-disulfide + H2O. Functionally, thiol-specific peroxidase that catalyzes the reduction of hydrogen peroxide and organic hydroperoxides to water and alcohols, respectively. Seems to contribute to the inhibition of germination during stress. This is 1-Cys peroxiredoxin PER1 (PER1) from Arabidopsis thaliana (Mouse-ear cress).